A 163-amino-acid polypeptide reads, in one-letter code: Lipoprotein signal peptidase (163 aa).

Transmembrane regions (helical) follow at residues 9 to 29, 42 to 62, 67 to 87, and 93 to 113; these read AWPW…SKYL, ILPF…SFLG, WQII…ILWL, and SEIM…GNFI. Residues Asp-123 and Asp-141 contribute to the active site. Residues 137–157 traverse the membrane as a helical segment; sequence FNVADSAICVGVFLLIVHMLL.

Belongs to the peptidase A8 family.

It localises to the cell inner membrane. It catalyses the reaction Release of signal peptides from bacterial membrane prolipoproteins. Hydrolyzes -Xaa-Yaa-Zaa-|-(S,diacylglyceryl)Cys-, in which Xaa is hydrophobic (preferably Leu), and Yaa (Ala or Ser) and Zaa (Gly or Ala) have small, neutral side chains.. It functions in the pathway protein modification; lipoprotein biosynthesis (signal peptide cleavage). Its function is as follows. This protein specifically catalyzes the removal of signal peptides from prolipoproteins. This is Lipoprotein signal peptidase from Coxiella burnetii (strain RSA 331 / Henzerling II).